We begin with the raw amino-acid sequence, 407 residues long: L-cysteine:1D-myo-inositol 2-amino-2-deoxy-alpha-D-glucopyranoside ligase (407 aa).

The tract at residues 1–22 (MRSWSAPDIVPLPGTGGPLRVH) is disordered. Cysteine 43 contributes to the Zn(2+) binding site. Residues 43 to 46 (CGIT), threonine 58, and 81 to 83 (NTT) contribute to the L-cysteinyl-5'-AMP site. The 'HIGH' region motif lies at 45-55 (ITPYDAAHLGH). Residues 183–188 (ERGGDP) carry the 'ERGGDP' region motif. Tryptophan 223 contributes to the L-cysteinyl-5'-AMP binding site. Position 227 (cysteine 227) interacts with Zn(2+). 245–247 (GSD) is an L-cysteinyl-5'-AMP binding site. Histidine 252 contributes to the Zn(2+) binding site. L-cysteinyl-5'-AMP is bound at residue valine 278. The short motif at 284–288 (KMSKS) is the 'KMSKS' region element.

This sequence belongs to the class-I aminoacyl-tRNA synthetase family. MshC subfamily. Monomer. It depends on Zn(2+) as a cofactor.

It catalyses the reaction 1D-myo-inositol 2-amino-2-deoxy-alpha-D-glucopyranoside + L-cysteine + ATP = 1D-myo-inositol 2-(L-cysteinylamino)-2-deoxy-alpha-D-glucopyranoside + AMP + diphosphate + H(+). In terms of biological role, catalyzes the ATP-dependent condensation of GlcN-Ins and L-cysteine to form L-Cys-GlcN-Ins. This Nocardiopsis dassonvillei (strain ATCC 23218 / DSM 43111 / CIP 107115 / JCM 7437 / KCTC 9190 / NBRC 14626 / NCTC 10488 / NRRL B-5397 / IMRU 509) (Actinomadura dassonvillei) protein is L-cysteine:1D-myo-inositol 2-amino-2-deoxy-alpha-D-glucopyranoside ligase.